A 640-amino-acid polypeptide reads, in one-letter code: Probable Ufm1-specific protease (640 aa).

Residues C467, D591, and H593 contribute to the active site.

Belongs to the peptidase C78 family.

In terms of biological role, thiol protease which recognizes and hydrolyzes the peptide bond at the C-terminal Gly of ufm-1, a ubiquitin-like modifier protein bound to a number of target proteins. This Oryza sativa subsp. japonica (Rice) protein is Probable Ufm1-specific protease.